The chain runs to 265 residues: 3-methyl-2-oxobutanoate hydroxymethyltransferase (265 aa).

The Mg(2+) site is built by aspartate 46 and aspartate 85. 3-methyl-2-oxobutanoate contacts are provided by residues 46–47, aspartate 85, and lysine 114; that span reads DS. Position 116 (glutamate 116) interacts with Mg(2+). Catalysis depends on glutamate 183, which acts as the Proton acceptor.

The protein belongs to the PanB family. In terms of assembly, homodecamer; pentamer of dimers. The cofactor is Mg(2+).

Its subcellular location is the cytoplasm. The enzyme catalyses 3-methyl-2-oxobutanoate + (6R)-5,10-methylene-5,6,7,8-tetrahydrofolate + H2O = 2-dehydropantoate + (6S)-5,6,7,8-tetrahydrofolate. Its pathway is cofactor biosynthesis; coenzyme A biosynthesis. Functionally, catalyzes the reversible reaction in which hydroxymethyl group from 5,10-methylenetetrahydrofolate is transferred onto alpha-ketoisovalerate to form ketopantoate. In Caldivirga maquilingensis (strain ATCC 700844 / DSM 13496 / JCM 10307 / IC-167), this protein is 3-methyl-2-oxobutanoate hydroxymethyltransferase.